The primary structure comprises 447 residues: 3-O-methyltransferase 2 (447 aa).

S-adenosyl-L-methionine-binding positions include 264 to 265, Asp-287, 318 to 319, and Arg-334; these read GG and DF. The active-site Proton acceptor is His-338.

Belongs to the class I-like SAM-binding methyltransferase superfamily. Cation-independent O-methyltransferase family. COMT subfamily.

Functionally, S-adenosyl-L-methionine-dependent methyltransferase that preferentially catalyzes the methylation of 3-OH phenolic compounds like isovanillic acid and 3-OH-4-Met cinnamic acid. May play a role in promoting lignin degradation by methylating and inactivating free-hydroxyl phenolic compounds, products of lignin cleavage which are known inhibitors of lignin peroxidases. The chain is 3-O-methyltransferase 2 from Phanerochaete chrysosporium (strain RP-78 / ATCC MYA-4764 / FGSC 9002) (White-rot fungus).